We begin with the raw amino-acid sequence, 401 residues long: MAFLSLFLCLVFSSPLMAMPPALQGRKAISPASILKGPSTDNGARDFHGRKFPHFMMQLYQNIISRRDKDLSNLEHPTLQESDTVQSFIAKSYTTKGNHWTLFFDMSSISTSNELKSAELRICLPSFGKSHSVTVEIYHTKDDKEKLFMGSFKTKISSALDADCKVFNLTMVLHNYLTKGKRLIKDEYIQAKGLLLRDLEKSATETGAERVDIVKQDKHHVSDFSAERIILVVFAKEKDHAKPDPPSLGKKLFPSKYGMADSANKVNGFRRLRRNKKEKTRMDVGTTPPKPVEEIKPKCRKVDMFVDFQKIGWGSWIVYPKAYNAYRCESACAVPLNETDDATNYSYIKSLLPLSDTDRRECPSCVPVKMRSMSMLYYENEDFVLRHHEEMIVEECGYKDI.

Residues 1-18 (MAFLSLFLCLVFSSPLMA) form the signal peptide. Residues 19 to 274 (MPPALQGRKA…KVNGFRRLRR (256 aa)) constitute a propeptide that is removed on maturation. Residues asparagine 168, asparagine 337, and asparagine 344 are each glycosylated (N-linked (GlcNAc...) asparagine). 2 cysteine pairs are disulfide-bonded: cysteine 299/cysteine 365 and cysteine 328/cysteine 396.

Belongs to the TGF-beta family. As to quaternary structure, monomer. The propeptide region interacts with bmp4 in a non-covalent manner. In terms of tissue distribution, expressed in the dorsal marginal region of late blastula, becoming restricted to the Spemann organizer at the early gastrula stage.

It localises to the secreted. Exhibits mesoderm-dorsalizing activity and neural-inducing activity, but lacks mesoderm-inducing activity. Regulates the expression of specific mesodermal and neural genes. Induces convergent extension movements at the embryonic midline by activating the fgf signaling pathway to induce t/bra expression in the organizer region. Acts with wnt11 to induce Spemann organizer cells and induce axis formation. The unprocessed protein antagonizes bmp-signaling. In Xenopus tropicalis (Western clawed frog), this protein is Nodal homolog 3-C.